Here is a 365-residue protein sequence, read N- to C-terminus: Peptide chain release factor 2 (365 aa).

N5-methylglutamine is present on Gln252.

Belongs to the prokaryotic/mitochondrial release factor family. In terms of processing, methylated by PrmC. Methylation increases the termination efficiency of RF2.

It localises to the cytoplasm. Peptide chain release factor 2 directs the termination of translation in response to the peptide chain termination codons UGA and UAA. The polypeptide is Peptide chain release factor 2 (prfB) (Haemophilus influenzae (strain ATCC 51907 / DSM 11121 / KW20 / Rd)).